The following is a 95-amino-acid chain: Small ribosomal subunit protein uS19 (95 aa).

A disordered region spans residues 73–95; that stretch reads EFSPTRTYRGHGADKNAKGSKKK.

This sequence belongs to the universal ribosomal protein uS19 family.

Protein S19 forms a complex with S13 that binds strongly to the 16S ribosomal RNA. The sequence is that of Small ribosomal subunit protein uS19 from Deinococcus radiodurans (strain ATCC 13939 / DSM 20539 / JCM 16871 / CCUG 27074 / LMG 4051 / NBRC 15346 / NCIMB 9279 / VKM B-1422 / R1).